A 107-amino-acid polypeptide reads, in one-letter code: Ribonuclease P protein component 4 (107 aa).

Zn(2+)-binding residues include Cys66, Cys69, Cys92, and Cys95.

Belongs to the eukaryotic/archaeal RNase P protein component 4 family. As to quaternary structure, consists of a catalytic RNA component and at least 4-5 protein subunits. The cofactor is Zn(2+).

It localises to the cytoplasm. The enzyme catalyses Endonucleolytic cleavage of RNA, removing 5'-extranucleotides from tRNA precursor.. Part of ribonuclease P, a protein complex that generates mature tRNA molecules by cleaving their 5'-ends. The polypeptide is Ribonuclease P protein component 4 (Methanosarcina barkeri (strain Fusaro / DSM 804)).